The sequence spans 331 residues: MRPALAVGLVFAGCCSNVIFLELLARKHPGCGNIVTFAQFLFIAVEGFLFEADLGRKPPAIPIRYYAIMVTMFFTVSVVNNYALNLNIAMPLHMIFRSGSLIANMILGIIILKKRYSIFKYTSIALVSVGIFICTFMSAKQVTSQSSLSENDGFQAFVWWLLGIGALTFALLMSARMGLFQETLYKRFGKHSKEALFYNHALPLPGFVFLASDIYDHAVLFNKSELYEIPVIGVTLPIMWFYLLMNIITQYVCIRGVFILTTECASLTVTLVVTLRKFVSLIFSILYFQNPFTLWHWLGTLFVFIGTLMYTEVWNNLGTTKSEPQKDSKKN.

11 helical membrane-spanning segments follow: residues 4-24 (ALAV…LELL), 30-50 (GCGN…GFLF), 59-79 (PAIP…VSVV), 92-112 (LHMI…IIIL), 117-137 (SIFK…CTFM), 153-173 (GFQA…ALLM), 201-221 (ALPL…AVLF), 229-249 (IPVI…NIIT), 251-267 (YVCI…CASL), 268-288 (TVTL…ILYF), and 291-311 (PFTL…LMYT). Residues 326–331 (KDSKKN) carry the Mediates endoplasmic reticulum retention motif.

Belongs to the nucleotide-sugar transporter family. SLC35B subfamily.

The protein resides in the endoplasmic reticulum membrane. The catalysed reaction is UDP-N-acetyl-alpha-D-glucosamine(in) + UDP-alpha-D-glucuronate(out) = UDP-N-acetyl-alpha-D-glucosamine(out) + UDP-alpha-D-glucuronate(in). It catalyses the reaction UDP-alpha-D-xylose(in) + UDP-alpha-D-glucuronate(out) = UDP-alpha-D-xylose(out) + UDP-alpha-D-glucuronate(in). In terms of biological role, antiporter that transports nucleotide sugars across the endoplasmic reticulum (ER) membrane in exchange for another nucleotide sugar. May couple UDP-alpha-D-glucuronate (UDP-GlcA) or UDP-alpha-D-xylose (UDP-Xyl) efflux to UDP-alpha-D-glucuronate (UDP-GlcA) influx into the ER lumen, which in turn stimulates glucuronidation and excretion of endobiotics and xenobiotics. In Pongo abelii (Sumatran orangutan), this protein is Nucleotide sugar transporter SLC35B4 (SLC35B4).